Consider the following 530-residue polypeptide: 2,3-bisphosphoglycerate-independent phosphoglycerate mutase (530 aa).

Residues Asp15 and Ser65 each coordinate Mn(2+). The Phosphoserine intermediate role is filled by Ser65. Substrate contacts are provided by residues His126, Arg155–Asp156, Arg187, Arg193, Arg257–Arg260, and Lys330. Mn(2+) is bound by residues Asp397, His401, Asp438, His439, and His456.

This sequence belongs to the BPG-independent phosphoglycerate mutase family. Monomer. Requires Mn(2+) as cofactor.

The catalysed reaction is (2R)-2-phosphoglycerate = (2R)-3-phosphoglycerate. The protein operates within carbohydrate degradation; glycolysis; pyruvate from D-glyceraldehyde 3-phosphate: step 3/5. Catalyzes the interconversion of 2-phosphoglycerate and 3-phosphoglycerate. This Synechococcus sp. (strain JA-2-3B'a(2-13)) (Cyanobacteria bacterium Yellowstone B-Prime) protein is 2,3-bisphosphoglycerate-independent phosphoglycerate mutase.